Consider the following 537-residue polypeptide: MKSWVRQGRRLVLVGMLAWVLLFLALLSYFLDARVNEPLTSTGSVLYQHPDTRRLASIQASQLHNTNLGSRPELASTLTATYTRDEPRPSATPEFSLEASQSPDSAPLAIYGGPEGIHQDYLDPQSLAAWSSFGTENIGSQSDPVIQSRERTSQNHGSITRYRGGEEEEEEEEEEERQENEDEDVANGLRNTAARKPGGDSSELEKYYFSKSISVVQRLWRGHVSADMLSPRLQRAMKDYVSANKHQVSYRGRRRPSQSAKELLCEMKAQARLQMVDGTQQPFSSLGWASLVPSLPLEQLHKRPDQGSFKSCAVVTSAGAILRSGLGREIDAHDAVLRFNAAPTEGYERDVGNKTTIRIINSQILANPNHRFNTSSLYKDVVLVAWDPAPYTLDLHKWYASPDYNLFGPYMEHRRAHPDQPFYILHPRYVWRLWDVIQGNTQENIQPNPPSSGFIGILLMMTLCEQVHVYEYIPSMRQSDLCHYHERYYDAACTLGAYHPLLYEKSLIQRINTGPGSDLRRKGRVTLPGFSTVDCDI.

Over 1-10 the chain is Cytoplasmic; sequence MKSWVRQGRR. Residues 11–31 form a helical; Signal-anchor for type II membrane protein membrane-spanning segment; sequence LVLVGMLAWVLLFLALLSYFL. Residues 32-537 are Lumenal-facing; it reads DARVNEPLTS…PGFSTVDCDI (506 aa). 2 disordered regions span residues 83–117 and 134–202; these read TRDE…PEGI and GTEN…GDSS. A compositionally biased stretch (polar residues) spans 134 to 145; it reads GTENIGSQSDPV. The segment covering 166-185 has biased composition (acidic residues); the sequence is EEEEEEEEEEERQENEDEDV. Intrachain disulfides connect C265–C535, C312–C464, and C482–C493. 2 N-linked (GlcNAc...) asparagine glycosylation sites follow: N353 and N373.

It belongs to the glycosyltransferase 29 family.

It is found in the golgi apparatus. The protein localises to the golgi stack membrane. The catalysed reaction is a beta-D-galactoside + CMP-N-acetyl-beta-neuraminate = an N-acetyl-alpha-neuraminyl-(2-&gt;6)-beta-D-galactosyl derivative + CMP + H(+). Its function is as follows. Transfers sialic acid from the donor of substrate CMP-sialic acid to galactose containing acceptor substrates. The sequence is that of Beta-galactoside alpha-2,6-sialyltransferase 2 (st6gal2) from Takifugu rubripes (Japanese pufferfish).